The following is a 271-amino-acid chain: Transmembrane protein 150A (271 aa).

Residues 1 to 2 (MT) are Cytoplasmic-facing. Residues 3–23 (AWILLPVSLSAFSITGIWTVY) traverse the membrane as a helical segment. The Extracellular portion of the chain corresponds to 24 to 75 (AMAVMNHHVCPVENWSYNESCPPDPAEQGGPKTCCTLDDVPLISKCGSYPPE). N-linked (GlcNAc...) asparagine glycosylation is found at Asn37 and Asn41. The chain crosses the membrane as a helical span at residues 76–96 (SCLFSLIGNMGAFMVALICLL). At 97–108 (RYGQLLEQSRHS) the chain is on the cytoplasmic side. The chain crosses the membrane as a helical span at residues 109–129 (WVNTTALITGCTNAAGLLVVG). Topologically, residues 130–140 (NFQVDHARSLH) are extracellular. A helical membrane pass occupies residues 141 to 161 (YVGAGVAFPAGLLFVCLHCAL). Residues 162–178 (SYQGATAPLDLAVAYLR) lie on the Cytoplasmic side of the membrane. A helical membrane pass occupies residues 179-199 (SVLAVIAFITLVLSGVFFVHE). Topologically, residues 200-211 (SSQLQHGAALCE) are extracellular. Residues 212-232 (WVCVIDILIFYGTFSYEFGAV) form a helical membrane-spanning segment. At 233–271 (SSDTLVAALQPTPGRACKSSGSSSTSTHLNCAPESIAMI) the chain is on the cytoplasmic side.

Belongs to the DRAM/TMEM150 family. As to quaternary structure, interacts (via C-terminal cytoplasmic tail) with PI4KA.

The protein resides in the cell membrane. In terms of biological role, regulates localization of phosphatidylinositol 4-kinase (PI4K) to the plasma membrane, possibly by reducing the association of TTC7 (TTC7A or TTC7B) with the PI4K complex. Acts as a regulator of phosphatidylinositol 4-phosphate (PtdIns(4)P) synthesis. May also play a role in fasting-induced catabolism. This Homo sapiens (Human) protein is Transmembrane protein 150A (TMEM150A).